Consider the following 198-residue polypeptide: ATP-dependent Clp protease proteolytic subunit (198 aa).

S98 serves as the catalytic Nucleophile. H123 is an active-site residue.

Belongs to the peptidase S14 family. In terms of assembly, fourteen ClpP subunits assemble into 2 heptameric rings which stack back to back to give a disk-like structure with a central cavity, resembling the structure of eukaryotic proteasomes.

The protein localises to the cytoplasm. It carries out the reaction Hydrolysis of proteins to small peptides in the presence of ATP and magnesium. alpha-casein is the usual test substrate. In the absence of ATP, only oligopeptides shorter than five residues are hydrolyzed (such as succinyl-Leu-Tyr-|-NHMec, and Leu-Tyr-Leu-|-Tyr-Trp, in which cleavage of the -Tyr-|-Leu- and -Tyr-|-Trp bonds also occurs).. Its function is as follows. Cleaves peptides in various proteins in a process that requires ATP hydrolysis. Has a chymotrypsin-like activity. Plays a major role in the degradation of misfolded proteins. In Bacillus velezensis (strain DSM 23117 / BGSC 10A6 / LMG 26770 / FZB42) (Bacillus amyloliquefaciens subsp. plantarum), this protein is ATP-dependent Clp protease proteolytic subunit.